A 37-amino-acid polypeptide reads, in one-letter code: Cytochrome b6-f complex subunit 5 (37 aa).

Residues 5–25 (FLFGIVLGLIPITLAGLFVTA) traverse the membrane as a helical segment.

This sequence belongs to the PetG family. In terms of assembly, the 4 large subunits of the cytochrome b6-f complex are cytochrome b6, subunit IV (17 kDa polypeptide, PetD), cytochrome f and the Rieske protein, while the 4 small subunits are PetG, PetL, PetM and PetN. The complex functions as a dimer.

The protein resides in the plastid. It is found in the chloroplast thylakoid membrane. In terms of biological role, component of the cytochrome b6-f complex, which mediates electron transfer between photosystem II (PSII) and photosystem I (PSI), cyclic electron flow around PSI, and state transitions. PetG is required for either the stability or assembly of the cytochrome b6-f complex. The protein is Cytochrome b6-f complex subunit 5 of Platanus occidentalis (Sycamore).